The sequence spans 331 residues: Threonine-phosphate decarboxylase (331 aa).

Lysine 192 carries the post-translational modification N6-(pyridoxal phosphate)lysine.

It belongs to the class-I pyridoxal-phosphate-dependent aminotransferase family. As to quaternary structure, homodimer. Pyridoxal 5'-phosphate serves as cofactor.

Its subcellular location is the cytoplasm. The catalysed reaction is O-phospho-L-threonine + H(+) = (R)-1-aminopropan-2-yl phosphate + CO2. It participates in cofactor biosynthesis; adenosylcobalamin biosynthesis. Functionally, decarboxylates L-threonine-O-3-phosphate to yield (R)-1-amino-2-propanol O-2-phosphate, the precursor for the linkage between the nucleotide loop and the corrin ring in cobalamin. This chain is Threonine-phosphate decarboxylase (cobC), found in Pseudomonas aeruginosa (strain ATCC 15692 / DSM 22644 / CIP 104116 / JCM 14847 / LMG 12228 / 1C / PRS 101 / PAO1).